We begin with the raw amino-acid sequence, 302 residues long: 4-diphosphocytidyl-2-C-methyl-D-erythritol kinase (302 aa).

Lys32 is an active-site residue. ATP is bound at residue 115–125 (PMGGGVGGGSS). The active site involves Asp157.

Belongs to the GHMP kinase family. IspE subfamily.

It carries out the reaction 4-CDP-2-C-methyl-D-erythritol + ATP = 4-CDP-2-C-methyl-D-erythritol 2-phosphate + ADP + H(+). It functions in the pathway isoprenoid biosynthesis; isopentenyl diphosphate biosynthesis via DXP pathway; isopentenyl diphosphate from 1-deoxy-D-xylulose 5-phosphate: step 3/6. In terms of biological role, catalyzes the phosphorylation of the position 2 hydroxy group of 4-diphosphocytidyl-2C-methyl-D-erythritol. This chain is 4-diphosphocytidyl-2-C-methyl-D-erythritol kinase, found in Actinobacillus succinogenes (strain ATCC 55618 / DSM 22257 / CCUG 43843 / 130Z).